The primary structure comprises 60 residues: MKVTCVLTLAVLILTIGQIANADSTLGQRYCKASGSWCGIHKHRECCSGNCFFWCVYNGK.

Positions 1–22 are cleaved as a signal peptide; sequence MKVTCVLTLAVLILTIGQIANA. Disulfide bonds link cysteine 31–cysteine 47, cysteine 38–cysteine 51, and cysteine 46–cysteine 55.

As to expression, expressed by the venom duct.

It localises to the secreted. Functionally, probable neurotoxin. The sequence is that of Conotoxin Cal6.30 from Californiconus californicus (California cone).